Reading from the N-terminus, the 278-residue chain is Orotidine 5'-phosphate decarboxylase (278 aa).

Substrate contacts are provided by residues Asp40, 62 to 64 (KTH), 93 to 102 (DRKFIDIGNT), Tyr228, and Arg246. The active-site Proton donor is the Lys95.

The protein belongs to the OMP decarboxylase family.

The enzyme catalyses orotidine 5'-phosphate + H(+) = UMP + CO2. It functions in the pathway pyrimidine metabolism; UMP biosynthesis via de novo pathway; UMP from orotate: step 2/2. This chain is Orotidine 5'-phosphate decarboxylase (PYR1), found in Passalora fulva (Tomato leaf mold).